The following is a 51-amino-acid chain: Lipid-anchored plasma membrane protein CPP3 (51 aa).

The interval 1–28 (MRHHQNMHYAPQQQPVYVQQPPPRRESG) is disordered.

It belongs to the CYSTM1 family. In terms of processing, palmitoylated near the C-terminus.

It localises to the cell membrane. This chain is Lipid-anchored plasma membrane protein CPP3, found in Saccharomyces cerevisiae (strain ATCC 204508 / S288c) (Baker's yeast).